Reading from the N-terminus, the 97-residue chain is Co-chaperonin GroES (97 aa).

This sequence belongs to the GroES chaperonin family. Heptamer of 7 subunits arranged in a ring. Interacts with the chaperonin GroEL.

Its subcellular location is the cytoplasm. Functionally, together with the chaperonin GroEL, plays an essential role in assisting protein folding. The GroEL-GroES system forms a nano-cage that allows encapsulation of the non-native substrate proteins and provides a physical environment optimized to promote and accelerate protein folding. GroES binds to the apical surface of the GroEL ring, thereby capping the opening of the GroEL channel. The sequence is that of Co-chaperonin GroES from Symbiobacterium thermophilum (strain DSM 24528 / JCM 14929 / IAM 14863 / T).